The sequence spans 99 residues: Large ribosomal subunit protein eL21 (99 aa).

Positions M1–K14 are enriched in polar residues. Residues M1–E38 are disordered.

The protein belongs to the eukaryotic ribosomal protein eL21 family.

In Halobacterium salinarum (strain ATCC 29341 / DSM 671 / R1), this protein is Large ribosomal subunit protein eL21.